A 367-amino-acid chain; its full sequence is Peptide chain release factor 2 (367 aa).

Gln-249 carries the N5-methylglutamine modification.

Belongs to the prokaryotic/mitochondrial release factor family. Post-translationally, methylated by PrmC. Methylation increases the termination efficiency of RF2.

The protein localises to the cytoplasm. In terms of biological role, peptide chain release factor 2 directs the termination of translation in response to the peptide chain termination codons UGA and UAA. This chain is Peptide chain release factor 2, found in Thermotoga petrophila (strain ATCC BAA-488 / DSM 13995 / JCM 10881 / RKU-1).